The chain runs to 540 residues: Phosphoenolpyruvate carboxykinase (ATP) (540 aa).

Arg-65 lines the substrate pocket. An N6-acetyllysine modification is found at Lys-87. Tyr-207 and Lys-213 together coordinate substrate. ATP-binding positions include Lys-213, His-232, and 248–256 (GLSGTGKTT). The Mn(2+) site is built by Lys-213 and His-232. Residue Asp-269 participates in Mn(2+) binding. ATP is bound by residues Glu-297, Arg-333, 449 to 450 (RI), and Thr-455. Arg-333 is a substrate binding site. Lys-523 carries the N6-acetyllysine modification.

Belongs to the phosphoenolpyruvate carboxykinase (ATP) family. In terms of assembly, monomer. It depends on Mn(2+) as a cofactor.

It is found in the cytoplasm. The catalysed reaction is oxaloacetate + ATP = phosphoenolpyruvate + ADP + CO2. It participates in carbohydrate biosynthesis; gluconeogenesis. Its function is as follows. Involved in the gluconeogenesis. Catalyzes the conversion of oxaloacetate (OAA) to phosphoenolpyruvate (PEP) through direct phosphoryl transfer between the nucleoside triphosphate and OAA. The chain is Phosphoenolpyruvate carboxykinase (ATP) from Shigella dysenteriae serotype 1 (strain Sd197).